We begin with the raw amino-acid sequence, 267 residues long: Type II pantothenate kinase (267 aa).

An ATP-binding site is contributed by 6–13 (DAGGTLIK). Residue E70 is the Proton acceptor of the active site. ATP is bound by residues T99, 121 to 125 (GGMIQ), Y137, and S225.

It belongs to the type II pantothenate kinase family. In terms of assembly, homodimer.

It is found in the cytoplasm. It carries out the reaction (R)-pantothenate + ATP = (R)-4'-phosphopantothenate + ADP + H(+). It participates in cofactor biosynthesis; coenzyme A biosynthesis; CoA from (R)-pantothenate: step 1/5. Catalyzes the phosphorylation of pantothenate (Pan), the first step in CoA biosynthesis. The chain is Type II pantothenate kinase from Staphylococcus aureus (strain Mu50 / ATCC 700699).